Consider the following 180-residue polypeptide: Small ribosomal subunit protein eS10y (180 aa).

A disordered region spans residues 92 to 180 (LKKQQKPLGR…GGGAAGSDLP (89 aa)). The span at 108–128 (DRPRGPPRGDGERRFGDRDGY) shows a compositional bias: basic and acidic residues. The segment covering 152–180 (FRGGAGGARQGFGRGAGGFGGGAAGSDLP) has biased composition (gly residues).

Belongs to the eukaryotic ribosomal protein eS10 family.

The protein resides in the cytoplasm. The protein is Small ribosomal subunit protein eS10y (RPS10B) of Arabidopsis thaliana (Mouse-ear cress).